Reading from the N-terminus, the 512-residue chain is Mannose-1-phosphate guanylyltransferase (512 aa).

Belongs to the mannose-6-phosphate isomerase type 2 family.

The catalysed reaction is alpha-D-mannose 1-phosphate + GTP + H(+) = GDP-alpha-D-mannose + diphosphate. The chain is Mannose-1-phosphate guanylyltransferase (noeJ) from Sinorhizobium fredii (strain NBRC 101917 / NGR234).